A 294-amino-acid chain; its full sequence is Small ribosomal subunit protein uS2 (294 aa).

A disordered region spans residues 232 to 294 (RATGTTEAPE…SAAGEADAAK (63 aa)). Basic and acidic residues predominate over residues 246 to 259 (EWERELLEGSKSEE). The span at 260–294 (AAAPAAAEEAPAAAEEAPAAAEATESAAGEADAAK) shows a compositional bias: low complexity.

Belongs to the universal ribosomal protein uS2 family.

The chain is Small ribosomal subunit protein uS2 from Arthrobacter sp. (strain FB24).